The primary structure comprises 1073 residues: ATP-dependent helicase/deoxyribonuclease subunit B (1073 aa).

Belongs to the helicase family. AddB/RexB type 2 subfamily. Heterodimer of AddA and RexB. It depends on Mg(2+) as a cofactor.

Functionally, the heterodimer acts as both an ATP-dependent DNA helicase and an ATP-dependent, dual-direction single-stranded exonuclease. Recognizes the chi site generating a DNA molecule suitable for the initiation of homologous recombination. This subunit has 5' -&gt; 3' nuclease activity but not helicase activity. The sequence is that of ATP-dependent helicase/deoxyribonuclease subunit B from Streptococcus equi subsp. zooepidemicus (strain MGCS10565).